Consider the following 249-residue polypeptide: Phosphomannomutase (249 aa).

The active-site Nucleophile is aspartate 15. Mg(2+) contacts are provided by aspartate 15 and aspartate 17. Aspartate 17 acts as the Proton donor/acceptor in catalysis. Residues arginine 24, arginine 126, arginine 137, arginine 144, serine 182, and aspartate 184 each contribute to the alpha-D-mannose 1-phosphate site. Residues aspartate 210, phenylalanine 222, and threonine 227 each contribute to the Mg(2+) site.

This sequence belongs to the eukaryotic PMM family. As to quaternary structure, homodimer. It depends on Mg(2+) as a cofactor. As to expression, expressed in roots, leaves, flag leaves and immature spikes.

Its subcellular location is the cytoplasm. It carries out the reaction alpha-D-mannose 1-phosphate = D-mannose 6-phosphate. Its pathway is nucleotide-sugar biosynthesis; GDP-alpha-D-mannose biosynthesis; alpha-D-mannose 1-phosphate from D-fructose 6-phosphate: step 2/2. In terms of biological role, catalyzes the interconversion of mannose-6-phosphate to mannose-1-phosphate, the precursor for the synthesis of GDP-mannose. GDP-mannose is an essential sugar nucleotide for the synthesis of D-mannose-containing cell wall polysaccharides (galactomannans and glucomannans), glycolipids, glycoproteins and the antioxidant L-ascorbate. Can complement the yeast temperature-sensitive mutant sec53-6. This is Phosphomannomutase from Triticum aestivum (Wheat).